Here is a 164-residue protein sequence, read N- to C-terminus: CDP-archaeol synthase (164 aa).

The next 4 membrane-spanning stretches (helical) occupy residues 3-23 (LTVF…AVFA), 55-75 (AIGI…YHVI), 77-97 (VFDA…GAFI), and 122-142 (FLVY…AVVI).

This sequence belongs to the CDP-archaeol synthase family. Mg(2+) is required as a cofactor.

Its subcellular location is the cell membrane. It carries out the reaction 2,3-bis-O-(geranylgeranyl)-sn-glycerol 1-phosphate + CTP + H(+) = CDP-2,3-bis-O-(geranylgeranyl)-sn-glycerol + diphosphate. The protein operates within membrane lipid metabolism; glycerophospholipid metabolism. Functionally, catalyzes the formation of CDP-2,3-bis-(O-geranylgeranyl)-sn-glycerol (CDP-archaeol) from 2,3-bis-(O-geranylgeranyl)-sn-glycerol 1-phosphate (DGGGP) and CTP. This reaction is the third ether-bond-formation step in the biosynthesis of archaeal membrane lipids. This Pyrobaculum aerophilum (strain ATCC 51768 / DSM 7523 / JCM 9630 / CIP 104966 / NBRC 100827 / IM2) protein is CDP-archaeol synthase.